We begin with the raw amino-acid sequence, 260 residues long: MISSLWIAKTGLDAQQTNMDVIANNLANVSTNGFKRQRAVFEDLLYQTIRQPGAQSSEQTTLPSGLQIGTGVRPVATERLHSQGNLSQTNNSKDVAIKGQGFFQVMLPDGSSAYTRDGSFQVDQNGQLVTAGGFQVQPAITIPANALSITIGRDGVVSVTQQGQAAPVQVGQLNLTTFMNDTGLESIGENLYTETQSSGAPNESTPGLNGAGLLYQGYVETSNVNVAEELVNMIQVQRAYEINSKAVSTTDQMLQKLTQL.

It belongs to the flagella basal body rod proteins family. As to quaternary structure, the basal body constitutes a major portion of the flagellar organelle and consists of four rings (L,P,S, and M) mounted on a central rod. The rod consists of about 26 subunits of FlgG in the distal portion, and FlgB, FlgC and FlgF are thought to build up the proximal portion of the rod with about 6 subunits each.

Its subcellular location is the bacterial flagellum basal body. This Escherichia coli O157:H7 protein is Flagellar basal-body rod protein FlgG (flgG).